A 1257-amino-acid chain; its full sequence is Phosphatidylinositol 3,4,5-trisphosphate 5-phosphatase 2 (1257 aa).

One can recognise an SH2 domain in the interval 21–117; that stretch reads WYHRDLSRAA…GLVCALLLPV (97 aa). The span at 119-132 shows a compositional bias: basic and acidic residues; it reads GEREPDPPDDRDAS. Residues 119 to 181 are disordered; that stretch reads GEREPDPPDD…ESTPNGLSTV (63 aa). Ser-132 carries the post-translational modification Phosphoserine. The span at 156–166 shows a compositional bias: pro residues; it reads PSSPLPAPETP. At Thr-165 the chain carries Phosphothreonine. Ser-241 and Ser-353 each carry phosphoserine. At Tyr-887 the chain carries Phosphotyrosine. Residue Ser-891 is modified to Phosphoserine. The segment at 897–986 is disordered; that stretch reads TGAKSKAPSV…PPKNSFNNPA (90 aa). Residues 939 to 951 show a composition bias toward pro residues; it reads PPPTGRPPAPPRA. The short motif at 945 to 950 is the SH3-binding element; that stretch reads PPAPPR. Over residues 952–966 the composition is skewed to basic and acidic residues; that stretch reads VPREESLNPRLKSEG. The short motif at 984-987 is the NPXY motif element; it reads NPAY. Tyr-987 is modified (phosphotyrosine). Residues 1004-1115 are disordered; it reads SFARAPIPPT…PASTFLEEVA (112 aa). Composition is skewed to pro residues over residues 1049-1060 and 1088-1104; these read LPPPDFPPPPLP and GPPP…PPGT. The residue at position 1132 (Ser-1132) is a Phosphoserine. Residues Tyr-1136 and Tyr-1161 each carry the phosphotyrosine modification. Residues 1195-1257 form the SAM domain; the sequence is LGEAGMGAWL…LLLDTLQLSK (63 aa). Ser-1256 bears the Phosphoserine mark.

It belongs to the inositol 1,4,5-trisphosphate 5-phosphatase family. As to quaternary structure, interacts with tyrosine phosphorylated form of SHC1. Interacts with EGFR. Upon stimulation by the EGF signaling pathway, it forms a complex with SHC1 and EGFR. Interacts with cytoskeletal protein SORBS3/vinexin, promoting its localization to the periphery of cells. Forms a complex with filamin (FLNA or FLNB), actin, GPIb (GP1BA or GP1BB) that regulates cortical and submembraneous actin. Interacts with c-Met/MET, when c-Met/MET is phosphorylated on 'Tyr-1356'. Interacts with p130Cas/BCAR1. Interacts with CENTD3/ARAP3 via its SAM domain. Interacts with c-Cbl/CBL and CAP/SORBS1. Interacts with activated EPHA2 receptor. Interacts with receptors FCGR2A. Interacts with FCGR2B. Interacts with tyrosine kinase ABL1. Interacts with tyrosine kinase TEC. Interacts with CSF1R. Interacts (via N-terminus) with SH3YL1 (via SH3 domain). Interacts (via SH2 domain) with tyrosine phosphorylated KLRC1 (via ITIM). Interacts with NEDD9/HEF1. Post-translationally, tyrosine phosphorylated by the members of the SRC family after exposure to a diverse array of extracellular stimuli such as insulin, growth factors such as EGF or PDGF, chemokines, integrin ligands and hypertonic and oxidative stress. May be phosphorylated upon IgG receptor FCGR2B-binding. Phosphorylated at Tyr-987 following cell attachment and spreading. Phosphorylated at Tyr-1161 following EGF signaling pathway stimulation.

Its subcellular location is the cytoplasm. The protein resides in the cytosol. It is found in the cytoskeleton. The protein localises to the membrane. It localises to the cell projection. Its subcellular location is the filopodium. The protein resides in the lamellipodium. It is found in the basal cell membrane. The protein localises to the nucleus. It localises to the nucleus speckle. Its subcellular location is the spindle pole. The catalysed reaction is a 1,2-diacyl-sn-glycero-3-phospho-(1D-myo-inositol-3,4,5-trisphosphate) + H2O = a 1,2-diacyl-sn-glycero-3-phospho-(1D-myo-inositol-3,4-bisphosphate) + phosphate. It catalyses the reaction 1,2-dioctanoyl-sn-glycero-3-phospho-(1D-myo-inositol-3,4,5-trisphosphate) + H2O = 1,2-dioctanoyl-sn-glycero-3-phospho-(1D-myo-inositol-3,4-bisphosphate) + phosphate. The enzyme catalyses 1,2-dihexadecanoyl-sn-glycero-3-phospho-(1D-myo-inositol-3,4,5-trisphosphate) + H2O = 1,2-dihexadecanoyl-sn-glycero-3-phospho-(1D-myo-inositol-3,4-bisphosphate) + phosphate. Activated upon translocation to the sites of synthesis of PtdIns(3,4,5)P3 in the membrane. Enzymatic activity is enhanced in the presence of phosphatidylserine. Its function is as follows. Phosphatidylinositol (PtdIns) phosphatase that specifically hydrolyzes the 5-phosphate of phosphatidylinositol-3,4,5-trisphosphate (PtdIns(3,4,5)P3) to produce PtdIns(3,4)P2, thereby negatively regulating the PI3K (phosphoinositide 3-kinase) pathways. Required for correct mitotic spindle orientation and therefore progression of mitosis. Plays a central role in regulation of PI3K-dependent insulin signaling, although the precise molecular mechanisms and signaling pathways remain unclear. While overexpression reduces both insulin-stimulated MAP kinase and Akt activation, its absence does not affect insulin signaling or GLUT4 trafficking. Confers resistance to dietary obesity. May act by regulating AKT2, but not AKT1, phosphorylation at the plasma membrane. Part of a signaling pathway that regulates actin cytoskeleton remodeling. Required for the maintenance and dynamic remodeling of actin structures as well as in endocytosis, having a major impact on ligand-induced EGFR internalization and degradation. Participates in regulation of cortical and submembraneous actin by hydrolyzing PtdIns(3,4,5)P3 thereby regulating membrane ruffling. Regulates cell adhesion and cell spreading. Required for HGF-mediated lamellipodium formation, cell scattering and spreading. Acts as a negative regulator of EPHA2 receptor endocytosis by inhibiting via PI3K-dependent Rac1 activation. Acts as a regulator of neuritogenesis by regulating PtdIns(3,4,5)P3 level and is required to form an initial protrusive pattern, and later, maintain proper neurite outgrowth. Acts as a negative regulator of the FC-gamma-RIIA receptor (FCGR2A). Mediates signaling from the FC-gamma-RIIB receptor (FCGR2B), playing a central role in terminating signal transduction from activating immune/hematopoietic cell receptor systems. Involved in EGF signaling pathway. Upon stimulation by EGF, it is recruited by EGFR and dephosphorylates PtdIns(3,4,5)P3. Plays a negative role in regulating the PI3K-PKB pathway, possibly by inhibiting PKB activity. Down-regulates Fc-gamma-R-mediated phagocytosis in macrophages independently of INPP5D/SHIP1. In macrophages, down-regulates NF-kappa-B-dependent gene transcription by regulating macrophage colony-stimulating factor (M-CSF)-induced signaling. Plays a role in the localization of AURKA and NEDD9/HEF1 to the basolateral membrane at interphase in polarized cysts, thereby mediates cell cycle homeostasis, cell polarization and cilia assembly. Additionally promotion of cilia growth is also facilitated by hydrolysis of (PtdIns(3,4,5)P3) to PtdIns(3,4)P2. Promotes formation of apical membrane-initiation sites during the initial stages of lumen formation via Rho family-induced actin filament organization and CTNNB1 localization to cell-cell contacts. May also hydrolyze PtdIns(1,3,4,5)P4, and could thus affect the levels of the higher inositol polyphosphates like InsP6. Involved in endochondral ossification. The sequence is that of Phosphatidylinositol 3,4,5-trisphosphate 5-phosphatase 2 from Rattus norvegicus (Rat).